Here is a 103-residue protein sequence, read N- to C-terminus: Small ribosomal subunit protein uS10 (103 aa).

Residues Leu-35 to Thr-59 are disordered.

Belongs to the universal ribosomal protein uS10 family. In terms of assembly, part of the 30S ribosomal subunit.

Functionally, involved in the binding of tRNA to the ribosomes. The polypeptide is Small ribosomal subunit protein uS10 (rps10) (Haloarcula marismortui (strain ATCC 43049 / DSM 3752 / JCM 8966 / VKM B-1809) (Halobacterium marismortui)).